The sequence spans 591 residues: MSNKRPNTTDGRTDLANGSLSSSPEEMSGAEEGRETSSGIEVEASDLSLSLTGDDGGPNRTSTESRGTDTESSGEEKDSDSMEDTGHYSINDESRGHGHSDEEDEEQPRHRGQRKRASRDQDSSDDERALEDWVSSETTALPRPRWQALPALRERELGSSARFVYEACGARVFVQRFRLQHGLEGHTGCVNTLHFNQRGTWLASGSDDLKVVVWDWVRRQPVLDFESGHKSNVFQAKFLPNSGDSTLAMCARDGQVRVAELSATQCCKNTKRVAQHKGASHKLALEPDSPCTFLSAGEDAVVFTIDLRQDRPASKLVVTKEKEKKVGLYTIYVNPANTHQFAVGGRDQYVRIYDQRKIDENENNGVLKKFCPHHLVNSESKANITCLVYSHDGTELLASYNDEDIYLFNSSHSDGAQYIKRYKGHRNNATVKGVNFYGPKSEFVVSGSDCGHIFLWEKSSCQIIQFMEGDKGGVVNCLEPHPHLPVLATSGLDHDVKIWAPTAEASTELTGLKEVIKKNKRERDEDSLHHTDLFDSHMLWFLMHHLRQRRHHRRWREPGVGATDADSDESPSSSDTSDEEEGPDRVQCMPS.

The span at Met-1 to Glu-25 shows a compositional bias: polar residues. Residues Met-1 to Ala-140 are disordered. Phosphoserine occurs at positions 22 and 23. A Nuclear export signal motif is present at residues Ile-40–Leu-51. Composition is skewed to basic and acidic residues over residues Arg-66–Ser-100 and Ser-118–Glu-131. Residues Ser-100, Ser-123, and Ser-124 each carry the phosphoserine modification. WD repeat units lie at residues Gly-185 to Asp-224, Gly-228 to Asn-269, Gln-275 to Lys-315, Glu-323 to Asn-363, Glu-379 to Tyr-418, Arg-426 to Phe-466, and Asp-470 to Leu-509. Omega-N-methylarginine; by PRMT1 is present on Arg-198. Residues His-552–Ser-591 are disordered.

Belongs to the WD repeat DCAF8 family. In terms of assembly, interacts with DDB1, CUL4A and CUL4B. Interacts with KPNA1, KPNB1 and XPO1. Expressed in the brain.

The protein localises to the nucleus. Its subcellular location is the cytoplasm. Its pathway is protein modification; protein ubiquitination. Functionally, may function as a substrate receptor for CUL4-DDB1 E3 ubiquitin-protein ligase complex. The protein is DDB1- and CUL4-associated factor 8 (Dcaf8) of Mus musculus (Mouse).